The chain runs to 402 residues: Sensor protein kinase FleS (402 aa).

In terms of domain architecture, Histidine kinase spans Ser188–Pro393. The residue at position 191 (His191) is a Phosphohistidine; by autocatalysis.

The enzyme catalyses ATP + protein L-histidine = ADP + protein N-phospho-L-histidine.. Functionally, member of the two-component regulatory system FleS/FleR that regulates the expression of multiple genes involved in flagellar synthesis, adhesion, swarming, motility and antibiotic resistance. May function as a membrane-associated protein kinase that phosphorylates FleR in response to environmental signals leading to activation of specific gene promoters. In Pseudomonas aeruginosa (strain ATCC 15692 / DSM 22644 / CIP 104116 / JCM 14847 / LMG 12228 / 1C / PRS 101 / PAO1), this protein is Sensor protein kinase FleS (fleS).